We begin with the raw amino-acid sequence, 226 residues long: Putative 5'-nucleotidase alr3139 (226 aa).

4 residues coordinate a divalent metal cation: aspartate 8, aspartate 9, serine 38, and asparagine 89.

The protein belongs to the SurE nucleotidase family. A divalent metal cation serves as cofactor.

Its subcellular location is the cytoplasm. It carries out the reaction a ribonucleoside 5'-phosphate + H2O = a ribonucleoside + phosphate. Functionally, nucleotidase that shows phosphatase activity on nucleoside 5'-monophosphates. The polypeptide is Putative 5'-nucleotidase alr3139 (Nostoc sp. (strain PCC 7120 / SAG 25.82 / UTEX 2576)).